A 490-amino-acid polypeptide reads, in one-letter code: Metal cation symporter ZIP14 (490 aa).

The first 28 residues, 1-28, serve as a signal peptide directing secretion; that stretch reads MELLRPALPSYFLLTLLSIWTAASEARA. Topologically, residues 29 to 155 are extracellular; the sequence is VSTGMPTISA…PSSVEVWGYG (127 aa). N-linked (GlcNAc...) asparagine glycosylation is found at Asn-75, Asn-85, and Asn-100. The interval 127-146 is disordered; the sequence is ACSSENQENEENEQTEEGRP. Residues 156–176 traverse the membrane as a helical segment; that stretch reads LLCVTVISLCSLLGASVVPFM. The Cytoplasmic segment spans residues 177–184; that stretch reads KKTFYKRL. A helical membrane pass occupies residues 185–205; it reads LLYFIALAIGTLYSNALFQLI. Residues 206-222 are Extracellular-facing; the sequence is PEAFGFNPMEDYYVSKS. A helical membrane pass occupies residues 223 to 243; sequence AVVFGGFYLFFFTEKILKMLL. Residues 244–395 lie on the Cytoplasmic side of the membrane; it reads KQKNEHHHGH…LLNAGMSLQQ (152 aa). The HHHGHXHX-motif motif lies at 249-256; sequence HHHGHSHY. Residues 374–379 carry the XEXPHE-motif motif; it reads EEFPHE. The chain crosses the membrane as a helical span at residues 396–416; that stretch reads ALFFNFLSACCCYVGLGFGIL. Residues 417–422 lie on the Extracellular side of the membrane; that stretch reads AGSHFS. The helical transmembrane segment at 423–443 threads the bilayer; sequence ANWIFALAGGMFLYISLADMF. At 444-459 the chain is on the cytoplasmic side; that stretch reads PEMNEVSQEDERKGSA. Residues 460–480 form a helical membrane-spanning segment; that stretch reads LIPFVIQNLGLLTGFGIMLVL. Over 481–490 the chain is Extracellular; that stretch reads TMYSGHIQIG.

This sequence belongs to the ZIP transporter (TC 2.A.5) family. Homotrimer. Post-translationally, ubiquitinated. Ubiquitination occurs upon iron depletion. The ubiquitinated form undergoes proteasomal degradation. N-glycosylated. N-glycosylation at Asn-100 is required for iron-regulated extraction of the transporter from membranes and subsequent proteasomal degradation.

It localises to the cell membrane. The protein resides in the apical cell membrane. The protein localises to the basolateral cell membrane. It is found in the early endosome membrane. Its subcellular location is the late endosome membrane. It localises to the lysosome membrane. It catalyses the reaction Zn(2+)(out) + 2 hydrogencarbonate(out) = Zn(2+)(in) + 2 hydrogencarbonate(in). It carries out the reaction Mn(2+)(out) + 2 hydrogencarbonate(out) = Mn(2+)(in) + 2 hydrogencarbonate(in). The enzyme catalyses Fe(2+)(out) + 2 hydrogencarbonate(out) = Fe(2+)(in) + 2 hydrogencarbonate(in). The catalysed reaction is Cd(2+)(out) + 2 hydrogencarbonate(out) = Cd(2+)(in) + 2 hydrogencarbonate(in). Functionally, electroneutral transporter of the plasma membrane mediating the cellular uptake of the divalent metal cations zinc, manganese and iron that are important for tissue homeostasis, metabolism, development and immunity. Functions as an energy-dependent symporter, transporting through the membranes an electroneutral complex composed of a divalent metal cation and two bicarbonate anions. Beside these endogenous cellular substrates, can also import cadmium a non-essential metal which is cytotoxic and carcinogenic. In Bos taurus (Bovine), this protein is Metal cation symporter ZIP14.